A 257-amino-acid polypeptide reads, in one-letter code: Thiazole synthase (257 aa).

Catalysis depends on Lys97, which acts as the Schiff-base intermediate with DXP. 1-deoxy-D-xylulose 5-phosphate-binding positions include Gly158, 184 to 185 (AG), and 206 to 207 (NT).

The protein belongs to the ThiG family. In terms of assembly, homotetramer. Forms heterodimers with either ThiH or ThiS.

The protein localises to the cytoplasm. The enzyme catalyses [ThiS sulfur-carrier protein]-C-terminal-Gly-aminoethanethioate + 2-iminoacetate + 1-deoxy-D-xylulose 5-phosphate = [ThiS sulfur-carrier protein]-C-terminal Gly-Gly + 2-[(2R,5Z)-2-carboxy-4-methylthiazol-5(2H)-ylidene]ethyl phosphate + 2 H2O + H(+). It functions in the pathway cofactor biosynthesis; thiamine diphosphate biosynthesis. Catalyzes the rearrangement of 1-deoxy-D-xylulose 5-phosphate (DXP) to produce the thiazole phosphate moiety of thiamine. Sulfur is provided by the thiocarboxylate moiety of the carrier protein ThiS. In vitro, sulfur can be provided by H(2)S. The polypeptide is Thiazole synthase (Desulforamulus reducens (strain ATCC BAA-1160 / DSM 100696 / MI-1) (Desulfotomaculum reducens)).